Consider the following 607-residue polypeptide: Thymidine kinase (607 aa).

2 disordered regions span residues 1-160 and 180-215; these read MAGF…ADST and DDKSDCESEDESNFRRPSSHSALKQKNGGKGKPSGL. Residues 17–32 are compositionally biased toward basic and acidic residues; it reads KCQEDESPENERHENF. Composition is skewed to polar residues over residues 88 to 106, 148 to 160, and 194 to 203; these read AAVTSNTGNSPGSRHTSCP, RKTSCTEGGADST, and RRPSSHSALK. 291–298 contributes to the ATP binding site; sequence GAPGVGKT. The active-site Proton acceptor is the E317. Q355 is a substrate binding site. Residue R445 coordinates ATP. R451 contacts substrate.

This sequence belongs to the herpesviridae thymidine kinase family. Homodimer.

Its subcellular location is the virion tegument. The protein localises to the host nucleus. The enzyme catalyses thymidine + ATP = dTMP + ADP + H(+). Catalyzes the transfer of the gamma-phospho group of ATP to thymidine to generate dTMP in the salvage pathway of pyrimidine synthesis. The dTMP serves as a substrate for DNA polymerase during viral DNA replication. Allows the virus to be reactivated and to grow in non-proliferative cells lacking a high concentration of phosphorylated nucleic acid precursors. This is Thymidine kinase from Homo sapiens (Human).